Consider the following 312-residue polypeptide: MPNSTTVMEFLLMRFSDVWTLQILHSASFFMLYLVTLMGNILIVTVTTCDSSLHMPMYFFLRNLSILDACYISVTVPTSCVNSLLDSTTISKAGCVAQVFLVVFFVYVELLFLTIMAHDRYVAVCQPLHYPVIVNSRICIQMTLASLLSGLVYAGMHTGSTFQLPFCRSNVIHQFFCDIPSLLKLSCSDTFSNEVMIVVSALGVGGGCFIFIIRSYIHIFSTVLGFPRGADRTKAFSTCIPHILVVSVFLSSCSSVYLRPPAIPAATQDLILSGFYSIMPPLFNPIIYSLRNKQIKVAIKKIMKRIFYSENV.

Topologically, residues 1–23 (MPNSTTVMEFLLMRFSDVWTLQI) are extracellular. Asn3 carries an N-linked (GlcNAc...) asparagine glycan. A helical membrane pass occupies residues 24–44 (LHSASFFMLYLVTLMGNILIV). At 45–52 (TVTTCDSS) the chain is on the cytoplasmic side. A helical transmembrane segment spans residues 53–73 (LHMPMYFFLRNLSILDACYIS). The Extracellular portion of the chain corresponds to 74 to 97 (VTVPTSCVNSLLDSTTISKAGCVA). Cys95 and Cys187 are joined by a disulfide. A helical transmembrane segment spans residues 98–118 (QVFLVVFFVYVELLFLTIMAH). The Cytoplasmic segment spans residues 119–137 (DRYVAVCQPLHYPVIVNSR). A helical transmembrane segment spans residues 138-158 (ICIQMTLASLLSGLVYAGMHT). Topologically, residues 159–194 (GSTFQLPFCRSNVIHQFFCDIPSLLKLSCSDTFSNE) are extracellular. Residues 195–215 (VMIVVSALGVGGGCFIFIIRS) form a helical membrane-spanning segment. Residues 216–235 (YIHIFSTVLGFPRGADRTKA) are Cytoplasmic-facing. The chain crosses the membrane as a helical span at residues 236–256 (FSTCIPHILVVSVFLSSCSSV). The Extracellular segment spans residues 257 to 269 (YLRPPAIPAATQD). The chain crosses the membrane as a helical span at residues 270-290 (LILSGFYSIMPPLFNPIIYSL). The Cytoplasmic segment spans residues 291–312 (RNKQIKVAIKKIMKRIFYSENV).

It belongs to the G-protein coupled receptor 1 family.

It is found in the cell membrane. Odorant receptor. This Homo sapiens (Human) protein is Olfactory receptor 14C36 (OR14C36).